The chain runs to 86 residues: Large ribosomal subunit protein bL31B (86 aa).

The protein belongs to the bacterial ribosomal protein bL31 family. Type B subfamily. In terms of assembly, part of the 50S ribosomal subunit.

The chain is Large ribosomal subunit protein bL31B from Citrobacter koseri (strain ATCC BAA-895 / CDC 4225-83 / SGSC4696).